The primary structure comprises 262 residues: Ribonuclease 3 (262 aa).

The RNase III domain occupies 18–141 (LATFLKNLDI…LVGAIYEDMG (124 aa)). E59 provides a ligand contact to Mg(2+). Residue D63 is part of the active site. Residues D127 and E130 each contribute to the Mg(2+) site. E130 is an active-site residue.

Belongs to the ribonuclease III family. As to quaternary structure, homodimer. Mg(2+) is required as a cofactor.

It is found in the cytoplasm. It catalyses the reaction Endonucleolytic cleavage to 5'-phosphomonoester.. In terms of biological role, digests double-stranded RNA. Involved in the processing of primary rRNA transcript to yield the immediate precursors to the large and small rRNAs (23S and 16S). Processes some mRNAs, and tRNAs when they are encoded in the rRNA operon. Processes pre-crRNA and tracrRNA of type II CRISPR loci if present in the organism. This chain is Ribonuclease 3, found in Mycoplasma genitalium (strain ATCC 33530 / DSM 19775 / NCTC 10195 / G37) (Mycoplasmoides genitalium).